Consider the following 260-residue polypeptide: HTH-type transcriptional repressor NanR (260 aa).

Residues 27–95 (KKLSDMVEEE…NGERARVSMP (69 aa)) form the HTH gntR-type domain. The segment at residues 55 to 74 (ERELMEFFNVGRPSVREALA) is a DNA-binding region (H-T-H motif).

The protein belongs to the NanR family.

Functionally, transcriptional repressor that controls expression of the genes required for the catabolism of sialic acids. This chain is HTH-type transcriptional repressor NanR, found in Enterobacter sp. (strain 638).